A 426-amino-acid chain; its full sequence is Ammonium transporter Rh type A (426 aa).

Over 1-4 (MRFK) the chain is Cytoplasmic. The chain crosses the membrane as a helical span at residues 5 to 25 (FPLMAIGLEVVMIVLFALFVQ). At 26-54 (YETSVNTSRNPNETESAAMDVEKTMESYP) the chain is on the extracellular side. Residues Asn-31 and Asn-37 are each glycosylated (N-linked (GlcNAc...) asparagine). The chain crosses the membrane as a helical span at residues 55-75 (FFQDVHIMVFAGFGFLMTFLW). The Cytoplasmic segment spans residues 76-78 (KYG). A helical transmembrane segment spans residues 79–99 (FSGVGINLLIAALGLQWGTII). Residues 100–124 (QGIFRSHGQKFLIEMKNMIHADFST) lie on the Extracellular side of the membrane. A run of 2 helical transmembrane segments spans residues 125–145 (VTVLISFGAVLGKTSPVQMLI) and 146–166 (MTILEITVYAANEYLVFKILW). Topologically, residues 167-170 (ASDT) are extracellular. The chain crosses the membrane as a helical span at residues 171 to 191 (GESMTIHAFGAYFGLAVAGIL). Residues 192–210 (YRSGLKEKHSNEESVYHSD) are Cytoplasmic-facing. The helical transmembrane segment at 211–231 (LFAMIGSLFLWIFWPSFNSAT) threads the bilayer. The Extracellular portion of the chain corresponds to 232–241 (ADEAKKQYRA). Residues 242 to 262 (IVNTYFSLAASVVTAYACSSL) traverse the membrane as a helical segment. Topologically, residues 263–270 (LESRGKLN) are cytoplasmic. The helical transmembrane segment at 271-288 (MVHIQNATLAGGVAVGTC) threads the bilayer. Topologically, residues 289–292 (ADME) are extracellular. The chain crosses the membrane as a helical span at residues 293 to 313 (IPPYYAMIIGSIAGAVSVFGF). The Cytoplasmic segment spans residues 314–331 (KFLTPLFTTKLRIHDTCG). The helical transmembrane segment at 332 to 352 (VHNLHGLPGVIGGLAGIITVA) threads the bilayer. Residues 353 to 371 (LEESDSTKTVSQAAALGSS) lie on the Extracellular side of the membrane. Residues 372 to 392 (IATALVGGLITGAILKIPFWA) form a helical membrane-spanning segment. Residues 393–426 (QPPDEDCYDDSVYWEVPERKEYDNHFHELLSTLH) lie on the Cytoplasmic side of the membrane.

This sequence belongs to the ammonium transporter (TC 2.A.49) family. Rh subfamily. In terms of assembly, homodimer. Heterotrimer; a RHCE monomer interacts with a RHAG homodimer. Component of the ankyrin-1 complex in the erythrocyte, composed of ANK1, RHCE, RHAG, SLC4A1, EPB42, GYPA, GYPB and AQP1. Interacts with GYPB (via the N-terminal); this interaction bridges the (RHAG)2(RHCE) heterotrimer with the SLC4A1 Band 3 I dimer complexed with GYPA. Post-translationally, glycosylated.

The protein localises to the membrane. It catalyses the reaction methylamine(out) = methylamine(in). The enzyme catalyses NH4(+)(in) = NH4(+)(out). It carries out the reaction CO2(out) = CO2(in). Its function is as follows. Component of the ankyrin-1 complex, a multiprotein complex involved in the stability and shape of the erythrocyte membrane. Heterotrimer with RHCE (RHAG)2(RHCE), that transports ammonium and its related derivative methylammonium, in both neutral and ionic forms, across the erythrocyte membrane. The transport of NH4(+) is electrogenic and masks the NH3 transport. Also, may act as a CO2 channel. Moreover in erythrocyte, regulates RHD membrane expression and is associated with rhesus blood group antigen expression. This chain is Ammonium transporter Rh type A, found in Bos taurus (Bovine).